Reading from the N-terminus, the 219-residue chain is Ribose-5-phosphate isomerase A (219 aa).

Residues Thr28–Thr31, Asp81–Asp84, and Lys94–Gly97 contribute to the substrate site. The active-site Proton acceptor is Glu103. Lys121 is a substrate binding site.

Belongs to the ribose 5-phosphate isomerase family. Homodimer.

The enzyme catalyses aldehydo-D-ribose 5-phosphate = D-ribulose 5-phosphate. Its pathway is carbohydrate degradation; pentose phosphate pathway; D-ribose 5-phosphate from D-ribulose 5-phosphate (non-oxidative stage): step 1/1. Its function is as follows. Catalyzes the reversible conversion of ribose-5-phosphate to ribulose 5-phosphate. The protein is Ribose-5-phosphate isomerase A of Shewanella sp. (strain MR-4).